The chain runs to 659 residues: Threonine--tRNA ligase (659 aa).

A TGS domain is found at 1 to 61 (MSAVPELRIT…ADGDVVEEIR (61 aa)). Residues 260-555 (DHRKLGVELD…LLEHYAGAFP (296 aa)) are catalytic. Residues C353, H404, and H532 each coordinate Zn(2+).

It belongs to the class-II aminoacyl-tRNA synthetase family. In terms of assembly, homodimer. Requires Zn(2+) as cofactor.

Its subcellular location is the cytoplasm. It carries out the reaction tRNA(Thr) + L-threonine + ATP = L-threonyl-tRNA(Thr) + AMP + diphosphate + H(+). Its function is as follows. Catalyzes the attachment of threonine to tRNA(Thr) in a two-step reaction: L-threonine is first activated by ATP to form Thr-AMP and then transferred to the acceptor end of tRNA(Thr). Also edits incorrectly charged L-seryl-tRNA(Thr). This is Threonine--tRNA ligase from Thermobifida fusca (strain YX).